A 430-amino-acid polypeptide reads, in one-letter code: Elongation factor 1-gamma (430 aa).

The 83-residue stretch at 2-84 (VAGKLYTYPE…YVANETLRGS (83 aa)) folds into the GST N-terminal domain. Residues 85–213 (SDLEKAQIIQ…FKLCEKAGEF (129 aa)) enclose the GST C-terminal domain. Composition is skewed to basic and acidic residues over residues 232-255 (KTEK…KEQE) and 269-278 (PKSKDPFDEM). The disordered stretch occupies residues 232–278 (KTEKAPKAVKAKPEKKEVPKKEQEEPADAAEEALAAEPKSKDPFDEM). The 160-residue stretch at 271–430 (SKDPFDEMPK…RKFNQGKIFK (160 aa)) folds into the EF-1-gamma C-terminal domain.

As to quaternary structure, EF-1 is composed of four subunits: alpha, beta, delta, and gamma.

Its function is as follows. Probably plays a role in anchoring the complex to other cellular components. This Artemia salina (Brine shrimp) protein is Elongation factor 1-gamma.